The primary structure comprises 179 residues: Large ribosomal subunit protein uL6 (179 aa).

This sequence belongs to the universal ribosomal protein uL6 family. As to quaternary structure, part of the 50S ribosomal subunit.

Its function is as follows. This protein binds to the 23S rRNA, and is important in its secondary structure. It is located near the subunit interface in the base of the L7/L12 stalk, and near the tRNA binding site of the peptidyltransferase center. In Bacillus anthracis, this protein is Large ribosomal subunit protein uL6.